The chain runs to 208 residues: Hemocyanin, units E and F (208 aa).

His-1 is a binding site for Cu cation. Residues 1 to 74 (HGLPAQCPNA…HDLESVRGNL (74 aa)) are unit E. Cys-7 and Cys-18 are oxidised to a cystine. A cross-link (2'-(S-cysteinyl)-histidine (Cys-His)) is located at residues 19 to 21 (CLH). The N-linked (GlcNAc...) asparagine glycan is linked to Asn-43. Residues 75–208 (VRKNVDRLSL…GHLSLLSPET (134 aa)) form a unit F region. His-113 contributes to the Cu cation binding site. Cys-119 and Cys-130 are oxidised to a cystine. Positions 131-133 (CLH) form a cross-link, 2'-(S-cysteinyl)-histidine (Cys-His). The Cu cation site is built by His-133 and His-142.

It belongs to the tyrosinase family. Hemocyanin subfamily. As to quaternary structure, decamers of large identical subunits (390 kDa), each containing 8 globular oxygen-binding functional units. The cofactor is Cu(2+).

Functionally, hemocyanins are copper-containing oxygen carriers occurring freely dissolved in the hemolymph of many mollusks and arthropods. The chain is Hemocyanin, units E and F from Sepia officinalis (Common cuttlefish).